The sequence spans 583 residues: MLO-like protein 6 (583 aa).

At 1 to 15 (MADQVKEKTLEETST) the chain is on the extracellular side. The chain crosses the membrane as a helical span at residues 16–36 (WAVAVVCFVLLLISIVIEKLI). Over 37–61 (HKIGSWFKKKNKKALYEALEKVKAE) the chain is Cytoplasmic. A helical transmembrane segment spans residues 62–82 (LMLMGFISLLLTIGQGYISNI). Topologically, residues 83–161 (CIPKNIAASM…VSAYGMHQLH (79 aa)) are extracellular. The helical transmembrane segment at 162–182 (IFIFVLAVCHVIYCIVTYALG) threads the bilayer. Topologically, residues 183–284 (KTKMRRWKKW…KYIQRSLEED (102 aa)) are cytoplasmic. Residues 285–305 (FKTIVEINPVIWFIAVLFLLT) traverse the membrane as a helical segment. The Extracellular segment spans residues 306–314 (NTNGLNSYL). Residues 315 to 335 (WLPFIPFIVILIVGTKLQVII) traverse the membrane as a helical segment. Residues 336 to 368 (TKLGLRIQEKGDVVKGTPLVQPGDHFFWFGRPR) lie on the Cytoplasmic side of the membrane. The chain crosses the membrane as a helical span at residues 369-389 (FILFLIHLVLFTNAFQLAFFV). The Extracellular portion of the chain corresponds to 390–411 (WSTYEFGLKNCFHESRVDVIIR). The chain crosses the membrane as a helical span at residues 412–432 (ISIGLLVQILCSYVTLPLYAL). The Cytoplasmic portion of the chain corresponds to 433 to 583 (VTQMGSKMKP…ISLRDFSFKR (151 aa)). The interval 447–468 (ERVATALKSWHHTAKKNIKHGR) is calmodulin-binding. The disordered stretch occupies residues 461 to 583 (KKNIKHGRTS…ISLRDFSFKR (123 aa)). Residues 470–484 (SESTTPFSSRPTTPT) are compositionally biased toward low complexity. Positions 541–551 (RFGEEESEKKF) are enriched in basic and acidic residues.

This sequence belongs to the MLO family.

It is found in the membrane. Its function is as follows. May be involved in modulation of pathogen defense and leaf cell death. Activity seems to be regulated by Ca(2+)-dependent calmodulin binding and seems not to require heterotrimeric G proteins. The sequence is that of MLO-like protein 6 (MLO6) from Arabidopsis thaliana (Mouse-ear cress).